Reading from the N-terminus, the 210-residue chain is HTH-type transcriptional repressor FabR (210 aa).

Residues 10–70 (KTRRSLVEAA…TMVDESGLML (61 aa)) form the HTH tetR-type domain. The segment at residues 33 to 52 (SLREVAREAGIAPTSFYRHF) is a DNA-binding region (H-T-H motif).

As to quaternary structure, homodimer.

The protein resides in the cytoplasm. Its function is as follows. Represses the transcription of fabB, involved in unsaturated fatty acid (UFA) biosynthesis. By controlling UFA production, FabR directly influences the physical properties of the membrane bilayer. The polypeptide is HTH-type transcriptional repressor FabR (Salmonella choleraesuis (strain SC-B67)).